Reading from the N-terminus, the 314-residue chain is Nodulation protein D 1 (314 aa).

One can recognise an HTH lysR-type domain in the interval 6–63 (LDLNLLVALDALMTERNLTAAARKIHLSQPAMSAAVARLRTYFGDELFTMRGRELVPT). A DNA-binding region (H-T-H motif) is located at residues 23-42 (LTAAARKIHLSQPAMSAAVA).

Belongs to the LysR transcriptional regulatory family.

Functionally, nodD regulates the expression of the nodABCFE genes which encode other nodulation proteins. NodD is also a negative regulator of its own expression. Binds flavonoids as inducers. The protein is Nodulation protein D 1 (nodD1) of Bradyrhizobium sp. (strain NC92).